The sequence spans 38 residues: Large ribosomal subunit protein bL36 (38 aa).

Belongs to the bacterial ribosomal protein bL36 family.

This Chloroherpeton thalassium (strain ATCC 35110 / GB-78) protein is Large ribosomal subunit protein bL36.